A 118-amino-acid polypeptide reads, in one-letter code: NLYQFKNMIHCTVPSRPWWHFADYGCYCGRGGKGTPVDDLDRCCQVHDNCYEKAGKMGCWPYLTLYKYKCSQGKLTCSGGNSKCGAAVCNCDLVAANCFAGARYIDANYNINFKKRCQ.

Cystine bridges form between Cys-11/Cys-70, Cys-26/Cys-117, Cys-28/Cys-44, Cys-43/Cys-98, Cys-50/Cys-91, Cys-59/Cys-84, and Cys-77/Cys-89. Residues Tyr-27, Gly-29, and Gly-31 each contribute to the Ca(2+) site. His-47 is an active-site residue. Position 48 (Asp-48) interacts with Ca(2+). The Coagulation factor Xa binding motif motif lies at 52 to 69 (EKAGKMGCWPYLTLYKYK). Asp-92 is a catalytic residue.

The protein belongs to the phospholipase A2 family. Group I subfamily. D49 sub-subfamily. Ca(2+) is required as a cofactor. In terms of tissue distribution, expressed by the venom gland.

It localises to the secreted. The enzyme catalyses a 1,2-diacyl-sn-glycero-3-phosphocholine + H2O = a 1-acyl-sn-glycero-3-phosphocholine + a fatty acid + H(+). Its function is as follows. Snake venom phospholipase A2 (PLA2) that shows strong anticoagulant activity. Binds directly with the coagulation factor FXa (F10) and blocks the formation of the prothombinase complex. Acts by a nonenzymatic mechanism. Also inhibits the complex composed of tissue factor (F3) and coagulation factor VIIa (F7) (TF-VIIa complex) by both enzymatic and nonenzymatic mechanisms. PLA2 catalyzes the calcium-dependent hydrolysis of the 2-acyl groups in 3-sn-phosphoglycerides. This Naja nigricollis (Black-necked spitting cobra) protein is Phospholipase A2 'basic'.